We begin with the raw amino-acid sequence, 120 residues long: Eukaryotic translation initiation factor 4E-binding protein 2 (120 aa).

Phosphothreonine; by MTOR occurs at positions 37 and 46. A YXXXXLphi motif motif is present at residues 54–60; sequence YDRKFLL. Ser65 carries the phosphoserine; by MTOR modification. Thr70 bears the Phosphothreonine; by MTOR mark. The residue at position 83 (Ser83) is a Phosphoserine. Deamidated asparagine is present on residues Asn99 and Asn102. Positions 116-120 match the TOS motif motif; sequence FEMDI.

The protein belongs to the eIF4E-binding protein family. In terms of assembly, hypophosphorylated EIF4EBP2 interacts with EIF4E; phosphorylation of EIF4EBP2 by mTORC1 causes dissociation of the complex allowing EIF4G1/EIF4G3 to bind and consequent initiation of translation. Interacts (via TOS motif) with RPTOR; promoting phosphorylation by mTORC1. Interacts with PCMT1; required to prevent isoaspartate accumulation and convert isoaspartate to Asp. Phosphorylation at Thr-37, Thr-46, Ser-65, Thr-70 and Ser-83 is mediated by MTOR and corresponds to the hyperphosphorylated form: it abolishes binding to EIF4E by inducing folding of intrinsically disordered regions. First phosphorylated at Thr-37 and Thr-46 by MTOR, inducing folding of region encompassing residues from Pro-18 to Arg-62 of into a four-stranded beta-domain that sequesters the helical YXXXXLPhi motif into a partly buried beta-strand, blocking accessibility to EIF4E. Protein phosphorylated at Thr-37 and Thr-46 is however unstable and subsequent phosphorylation at Ser-65, Thr-70 and Ser-83 is required to stabilize the fold, decreasing affinity for EIF4E by a factor of 4000. Phosphorylated in response to insulin, EGF and PDGF. In terms of processing, deamidated at Asn-99 and Asn-102 to aspartate (Asp) in brain. Deamidation promotes interaction with RPTOR, subsequent phosphorylation by mTORC1 and increased translation, leading to impair kinetics of excitatory synaptic transmission. Deamidation takes place during postnatal development, when the PI3K-Akt-mTOR signaling is reduced, suggesting it acts as a compensatory mechanism to promote translation despite attenuated PI3K-Akt-mTOR signaling in neuron development. Deamidation converts Asn residues into a mixture of Asp and isoaspartate; interactions with PCMT1 is required to prevent isoaspartate accumulation and convert isoaspartate to Asp. Enriched in brain.

It localises to the cytoplasm. The protein resides in the nucleus. Its function is as follows. Repressor of translation initiation involved in synaptic plasticity, learning and memory formation. Regulates EIF4E activity by preventing its assembly into the eIF4F complex: hypophosphorylated form of EIF4EBP2 competes with EIF4G1/EIF4G3 and strongly binds to EIF4E, leading to repress translation. In contrast, hyperphosphorylated form dissociates from EIF4E, allowing interaction between EIF4G1/EIF4G3 and EIF4E, leading to initiation of translation. EIF4EBP2 is enriched in brain and acts as a regulator of synapse activity and neuronal stem cell renewal via its ability to repress translation initiation. Mediates the regulation of protein translation by hormones, growth factors and other stimuli that signal through the MAP kinase and mTORC1 pathways. This is Eukaryotic translation initiation factor 4E-binding protein 2 from Mus musculus (Mouse).